Consider the following 250-residue polypeptide: Insertion sequence IS232 putative ATP-binding protein (250 aa).

108–115 (GPSGVGKT) lines the ATP pocket.

It belongs to the IS21/IS1162 putative ATP-binding protein family.

This is Insertion sequence IS232 putative ATP-binding protein from Bacillus thuringiensis subsp. berliner.